An 88-amino-acid chain; its full sequence is Small ribosomal subunit protein bS16 (88 aa).

It belongs to the bacterial ribosomal protein bS16 family.

This is Small ribosomal subunit protein bS16 from Anaeromyxobacter sp. (strain Fw109-5).